Consider the following 297-residue polypeptide: Bifonsecin B biosynthesis cluster protein A (297 aa).

The N-terminal stretch at 1-20 (MHFWWTAISAGLLCLPQALG) is a signal peptide. N-linked (GlcNAc...) asparagine glycans are attached at residues Asn26, Asn56, Asn75, Asn124, Asn175, Asn210, and Asn280.

This sequence belongs to the bfoA family.

Functionally, part of the gene cluster that mediates the biosynthesis of bifonsecin B, a dimeric gamma-naphthopyrone. The first step in the biosynthesis of bifonsecin B is the production of gamma-naphthopyrone precursor YWA1 by the non-reducing polyketide synthase albA, via condensation of one acetyl-CoA starter unit with 6 malonyl-CoA units. YWA1 is then methylated by bfoE at position C-6 to yield foncesin which is further methylated at position C-8 by bfoD to produce fonsecin B. A key enzyme in the biosynthetic pathway is the cytochrome P450 monooxygenase bfoB which catalyzes the oxidative dimerization of fonsecin B to bifonsecin B. Bfob also catalyzes the oxidative dimerization of rubrofusarin B into nigerone. The stereoselectivity of bfoB is influenced by the two natural monomeric substrates; homodimerization of fonsecin B yields a stereochemically pure biaryl, M-foncerine B, while rubrofusarin B yields a mixture of enantiomers M- and P-nigerone. The function of bfoA within the bifonsecin B biosynthesis pathway has not been determined yet. The protein is Bifonsecin B biosynthesis cluster protein A of Aspergillus brasiliensis (strain CBS 101740 / IMI 381727 / IBT 21946).